Reading from the N-terminus, the 317-residue chain is MNKFKNIAVYGGGSFGTSLAALAAQNCSNVTLFLRDEEIAKEILHKKTNIKYLGGIKLPAHLHATTNLSVIKDFELIIIAVPSYAFDDSIKLLKTHGISEDNTLLIATKGFARNPTELFSDRLKTLLPHSSTAFFAGPNLAKELAKNLPASASIASLDIDIANKIANNISSKIFTTNMTSDIVTLQVAGALKNIFAIKSGIDLASEQGENARATLIVDALKEIITLSKVFGGLQKNSDILLEAGVVGDLVLTCYALGSRNTNFGYELGISSDKKKFLQEYKQLVEGREALKLVLDLIKQYDLHMPIISEVASYVMPA.

Positions 14, 15, 35, and 109 each coordinate NADPH. Sn-glycerol 3-phosphate contacts are provided by Lys-109 and Gly-137. Ala-141 serves as a coordination point for NADPH. Positions 192, 248, 258, 259, and 260 each coordinate sn-glycerol 3-phosphate. Lys-192 acts as the Proton acceptor in catalysis. NADPH is bound at residue Arg-259. 2 residues coordinate NADPH: Leu-283 and Glu-285.

It belongs to the NAD-dependent glycerol-3-phosphate dehydrogenase family.

The protein resides in the cytoplasm. It catalyses the reaction sn-glycerol 3-phosphate + NAD(+) = dihydroxyacetone phosphate + NADH + H(+). The catalysed reaction is sn-glycerol 3-phosphate + NADP(+) = dihydroxyacetone phosphate + NADPH + H(+). It functions in the pathway membrane lipid metabolism; glycerophospholipid metabolism. In terms of biological role, catalyzes the reduction of the glycolytic intermediate dihydroxyacetone phosphate (DHAP) to sn-glycerol 3-phosphate (G3P), the key precursor for phospholipid synthesis. The protein is Glycerol-3-phosphate dehydrogenase [NAD(P)+] of Rickettsia akari (strain Hartford).